A 368-amino-acid polypeptide reads, in one-letter code: Divinyl chlorophyll a/b light-harvesting protein PcbA (368 aa).

The next 6 helical transmembrane spans lie at 27 to 47, 63 to 83, 89 to 109, 203 to 223, 243 to 263, and 307 to 327; these read FIAS…ANTL, GFVV…NGVI, MLVV…GAML, VMGG…WHIF, FVLS…AFWA, and LSNF…WHGL.

This sequence belongs to the PsbB/PsbC family. IsiA/Pcb subfamily. In terms of assembly, the antenna complex consists of divinyl chlorophylls (a and b) and divinyl chlorophyll a/b binding proteins. Forms complexes with PSII, consisting of a PSII dimer and 4 or 8 PcbA subunits. These complexes are also found under conditions of iron-starvation. It depends on divinyl chlorophyll a as a cofactor. Divinyl chlorophyll b serves as cofactor.

The protein resides in the cellular thylakoid membrane. In terms of biological role, the antenna complex functions as a light receptor, it captures and delivers excitation energy to photosystems II. The Prochlorales pcb genes are not related to higher plant LHCs. The polypeptide is Divinyl chlorophyll a/b light-harvesting protein PcbA (pcbA) (Prochlorococcus marinus (strain MIT 9313)).